Reading from the N-terminus, the 201-residue chain is NADH-quinone oxidoreductase subunit C (201 aa).

Belongs to the complex I 30 kDa subunit family. As to quaternary structure, NDH-1 is composed of 14 different subunits. Subunits NuoB, C, D, E, F, and G constitute the peripheral sector of the complex.

The protein resides in the cell inner membrane. It carries out the reaction a quinone + NADH + 5 H(+)(in) = a quinol + NAD(+) + 4 H(+)(out). Functionally, NDH-1 shuttles electrons from NADH, via FMN and iron-sulfur (Fe-S) centers, to quinones in the respiratory chain. The immediate electron acceptor for the enzyme in this species is believed to be ubiquinone. Couples the redox reaction to proton translocation (for every two electrons transferred, four hydrogen ions are translocated across the cytoplasmic membrane), and thus conserves the redox energy in a proton gradient. The chain is NADH-quinone oxidoreductase subunit C from Sinorhizobium medicae (strain WSM419) (Ensifer medicae).